The primary structure comprises 296 residues: Ribosomal RNA small subunit methyltransferase A (296 aa).

S-adenosyl-L-methionine is bound by residues asparagine 31, leucine 33, glycine 58, glutamate 79, aspartate 111, and asparagine 136.

The protein belongs to the class I-like SAM-binding methyltransferase superfamily. rRNA adenine N(6)-methyltransferase family. RsmA subfamily.

It localises to the cytoplasm. It carries out the reaction adenosine(1518)/adenosine(1519) in 16S rRNA + 4 S-adenosyl-L-methionine = N(6)-dimethyladenosine(1518)/N(6)-dimethyladenosine(1519) in 16S rRNA + 4 S-adenosyl-L-homocysteine + 4 H(+). Specifically dimethylates two adjacent adenosines (A1518 and A1519) in the loop of a conserved hairpin near the 3'-end of 16S rRNA in the 30S particle. May play a critical role in biogenesis of 30S subunits. This is Ribosomal RNA small subunit methyltransferase A from Lactobacillus delbrueckii subsp. bulgaricus (strain ATCC BAA-365 / Lb-18).